A 112-amino-acid chain; its full sequence is Protein GAST1 (112 aa).

Residues 1-25 (MAGKMSIVLFVLLVVFLTQNQVSRA) form the signal peptide.

Belongs to the GASA family. Post-translationally, six disulfide bonds may be present. All shoot organs.

It localises to the secreted. In Solanum lycopersicum (Tomato), this protein is Protein GAST1 (GAST1).